The following is a 505-amino-acid chain: Putative heat shock protein HSP 90-beta 4 (505 aa).

3 residues coordinate ATP: N22, K83, and F109. Residues 197–248 form a disordered region; sequence EKEISDDEEEKGEKEEEDKDDKEKPKTEDVGSDEEDDTDKNNKKKTKKIKEK. A compositionally biased stretch (acidic residues) spans 200 to 216; it reads ISDDEEEKGEKEEEDKD.

It belongs to the heat shock protein 90 family. In terms of assembly, homodimer.

It localises to the cytoplasm. Functionally, putative molecular chaperone that may promote the maturation, structural maintenance and proper regulation of specific target proteins. The polypeptide is Putative heat shock protein HSP 90-beta 4 (HSP90AB4P) (Homo sapiens (Human)).